A 72-amino-acid chain; its full sequence is Translation initiation factor IF-1 (72 aa).

The S1-like domain occupies 1-72 (MAKEDSIEMQ…TKGRIVFRAR (72 aa)).

The protein belongs to the IF-1 family. Component of the 30S ribosomal translation pre-initiation complex which assembles on the 30S ribosome in the order IF-2 and IF-3, IF-1 and N-formylmethionyl-tRNA(fMet); mRNA recruitment can occur at any time during PIC assembly.

The protein localises to the cytoplasm. One of the essential components for the initiation of protein synthesis. Stabilizes the binding of IF-2 and IF-3 on the 30S subunit to which N-formylmethionyl-tRNA(fMet) subsequently binds. Helps modulate mRNA selection, yielding the 30S pre-initiation complex (PIC). Upon addition of the 50S ribosomal subunit IF-1, IF-2 and IF-3 are released leaving the mature 70S translation initiation complex. This Idiomarina loihiensis (strain ATCC BAA-735 / DSM 15497 / L2-TR) protein is Translation initiation factor IF-1.